The following is a 302-amino-acid chain: RNA polymerase II holoenzyme cyclin-like subunit (302 aa).

Positions 53–142 constitute a Cyclin N-terminal domain; sequence QQLIKLGKRM…VGECEFSLIS (90 aa).

This sequence belongs to the cyclin family. Cyclin C subfamily. In terms of assembly, component of the srb8-11 complex, a regulatory module of the Mediator complex.

Its subcellular location is the nucleus. Functionally, component of the srb8-11 complex. The srb8-11 complex is a regulatory module of the Mediator complex which is itself involved in regulation of basal and activated RNA polymerase II-dependent transcription. The srb8-11 complex may be involved in the transcriptional repression of a subset of genes regulated by Mediator. It may inhibit the association of the Mediator complex with RNA polymerase II to form the holoenzyme complex. The srb8-11 complex phosphorylates the C-terminal domain (CTD) of the largest subunit of RNA polymerase II. The chain is RNA polymerase II holoenzyme cyclin-like subunit (ssn8) from Emericella nidulans (strain FGSC A4 / ATCC 38163 / CBS 112.46 / NRRL 194 / M139) (Aspergillus nidulans).